A 367-amino-acid chain; its full sequence is Glutamate 5-kinase (367 aa).

ATP is bound at residue Lys-10. 3 residues coordinate substrate: Ser-50, Asp-137, and Asn-149. ATP is bound by residues 169–170 and 211–217; these read TD and TGGMSTK. Positions 275–353 constitute a PUA domain; it reads AGEITVDEGA…QEIDAILGYE (79 aa).

The protein belongs to the glutamate 5-kinase family.

It is found in the cytoplasm. It carries out the reaction L-glutamate + ATP = L-glutamyl 5-phosphate + ADP. The protein operates within amino-acid biosynthesis; L-proline biosynthesis; L-glutamate 5-semialdehyde from L-glutamate: step 1/2. Catalyzes the transfer of a phosphate group to glutamate to form L-glutamate 5-phosphate. This is Glutamate 5-kinase from Escherichia coli O81 (strain ED1a).